The primary structure comprises 512 residues: Protein maelstrom homolog (512 aa).

A DNA-binding region (HMG box) is located at residues 9-75; that stretch reads AKGPFYFFMM…NPKEAGGYGE (67 aa). 3 disordered regions span residues 49-72, 360-421, and 439-465; these read APHE…EAGG, RMSK…GTRA, and QSAN…DPQS. Residues 360–370 are compositionally biased toward polar residues; sequence RMSKLTTTSDN. The span at 379-388 shows a compositional bias: basic and acidic residues; it reads RSTDRTDRDV. 2 stretches are compositionally biased toward polar residues: residues 393–421 and 439–449; these read IYSS…GTRA and QSANRSPTKKN. Residues 451–464 are compositionally biased toward basic and acidic residues; it reads WSRENKLTEVRDPQ.

It belongs to the maelstrom family.

The protein localises to the cytoplasm. Its subcellular location is the nucleus. In terms of biological role, plays a central role during gametogenesis by repressing transposable elements and preventing their mobilization, which is essential for the germline integrity. Probably acts via the piRNA metabolic process, which mediates the repression of transposable elements during meiosis by forming complexes composed of piRNAs and Piwi proteins and governs the repression of transposons. The protein is Protein maelstrom homolog (mael) of Culex quinquefasciatus (Southern house mosquito).